The following is a 319-amino-acid chain: MSQQKIGVLLVNLGTPEHPTAPAIRKFLKPFLADSRVIDYPKFLWKPILYSFILPFRPRKVKPLYQHVWTNEGSPLYANAIGQEKALQAHFDQSEHGVLVRATMAYSKPSISDVVDEFLKEKVAKMIVLPLFPQYSSTTTAAIFDAFAQSLKKKKDIPPFDFIHHYYERPSYIQALAQTIHLQENEHLLFSFHGIPQRYVIEGDYYTEHCQQTAQLIAVAAGLSEEQWQVSYQSRFGPEEWTRPYTDETLIQLPKQGKKKLAVICPGFAADCLETLEEIDITNRKHFMAAGGQAYRYIPALNASPAHIQLLAELISERL.

Fe(2+)-binding residues include His-193 and Glu-274.

The protein belongs to the ferrochelatase family.

It localises to the cytoplasm. The enzyme catalyses Fe-coproporphyrin III + 2 H(+) = coproporphyrin III + Fe(2+). It functions in the pathway porphyrin-containing compound metabolism; protoheme biosynthesis. Its function is as follows. Involved in coproporphyrin-dependent heme b biosynthesis. Catalyzes the insertion of ferrous iron into coproporphyrin III to form Fe-coproporphyrin III. The polypeptide is Coproporphyrin III ferrochelatase (Streptococcus mutans serotype c (strain ATCC 700610 / UA159)).